The following is a 258-amino-acid chain: L-2,3-butanediol dehydrogenase (258 aa).

NAD(+) is bound by residues 12–14 (QGI), Asp-33, Gln-37, 61–62 (DV), Asn-88, Tyr-154, Lys-158, and 184–189 (PGIVGT). The active-site Proton acceptor is the Tyr-154.

This sequence belongs to the short-chain dehydrogenases/reductases (SDR) family. In terms of assembly, homotetramer.

It catalyses the reaction (S,S)-butane-2,3-diol + NAD(+) = (S)-acetoin + NADH + H(+). The enzyme catalyses (S)-acetoin + NAD(+) = diacetyl + NADH + H(+). Slightly activated by Ba(2+), Ca(2+), Mn(2+), Mg(2+), and Co(2+), while Hg(2+) and Cu(2+) cause marked inhibition of the activity. Ni(2+), Zn(2+) and Cd(2+) have no effect on the catalytic activity. Is also slightly inhibited by lactate, pyruvate, succinate, acetate and formate. Functionally, catalyzes the reversible reduction of (S)-acetoin to (S,S)-butane-2,3-diol (L-BD) in the presence of NADH. To a lesser extent, can also catalyze the irreversible reduction of diacetyl to (S)-acetoin. Cannot oxidize meso-BD, D-BD, 2-butanol, 1,2-propanediol, ethanol, acetol, 1,2-butanediol, 1,3-butanediol, n-butanol, and n-propanol. Cannot reduce (R)-acetoin, acetol, dihydroxyacetone and 2,4-pentanedione. This chain is L-2,3-butanediol dehydrogenase, found in Corynebacterium glutamicum (Brevibacterium saccharolyticum).